Reading from the N-terminus, the 214-residue chain is Uridine kinase (214 aa).

11 to 18 provides a ligand contact to ATP; the sequence is GGSGSGKT.

This sequence belongs to the uridine kinase family.

It is found in the cytoplasm. It catalyses the reaction uridine + ATP = UMP + ADP + H(+). It carries out the reaction cytidine + ATP = CMP + ADP + H(+). It participates in pyrimidine metabolism; CTP biosynthesis via salvage pathway; CTP from cytidine: step 1/3. Its pathway is pyrimidine metabolism; UMP biosynthesis via salvage pathway; UMP from uridine: step 1/1. The protein is Uridine kinase of Brevibacillus brevis (strain 47 / JCM 6285 / NBRC 100599).